A 209-amino-acid chain; its full sequence is Large ribosomal subunit protein uL3 (209 aa).

The tract at residues 126 to 148 (HGQSRGPMAHGSRYHRRPGSMGP) is disordered.

Belongs to the universal ribosomal protein uL3 family. In terms of assembly, part of the 50S ribosomal subunit. Forms a cluster with proteins L14 and L19.

In terms of biological role, one of the primary rRNA binding proteins, it binds directly near the 3'-end of the 23S rRNA, where it nucleates assembly of the 50S subunit. The sequence is that of Large ribosomal subunit protein uL3 from Listeria monocytogenes serotype 4b (strain CLIP80459).